Consider the following 220-residue polypeptide: Adenylate kinase (220 aa).

An ATP-binding site is contributed by 10 to 15 (GAGKGT). The interval 30–59 (STGDMLRAAVKAGTPLGVEAKGYMDAGKLV) is NMP. AMP-binding positions include T31, R36, 57 to 59 (KLV), 85 to 88 (GFPR), and Q92. An LID region spans residues 122–159 (GRRTHPASGRTYHVKFNPPKVEGKDDVTGEPLIQRDDD). ATP is bound by residues R123 and 132–133 (TY). AMP-binding residues include R156 and R167. G206 serves as a coordination point for ATP.

This sequence belongs to the adenylate kinase family. As to quaternary structure, monomer.

It localises to the cytoplasm. The enzyme catalyses AMP + ATP = 2 ADP. Its pathway is purine metabolism; AMP biosynthesis via salvage pathway; AMP from ADP: step 1/1. Catalyzes the reversible transfer of the terminal phosphate group between ATP and AMP. Plays an important role in cellular energy homeostasis and in adenine nucleotide metabolism. The chain is Adenylate kinase from Burkholderia multivorans (strain ATCC 17616 / 249).